Consider the following 341-residue polypeptide: Ketol-acid reductoisomerase (NADP(+)) (341 aa).

Residues 2 to 181 (AKVYYNGDAN…GATRAGVLET (180 aa)) enclose the KARI N-terminal Rossmann domain. Residues 25–28 (YGSQ), Arg-48, Ser-52, and 82–85 (DEKQ) contribute to the NADP(+) site. The active site involves His-107. Gly-133 is a binding site for NADP(+). Residues 182 to 327 (TFKEETETDL…RELRSMMPFV (146 aa)) enclose the KARI C-terminal knotted domain. 4 residues coordinate Mg(2+): Asp-190, Glu-194, Glu-226, and Glu-230. A substrate-binding site is contributed by Ser-251.

It belongs to the ketol-acid reductoisomerase family. Mg(2+) serves as cofactor.

The catalysed reaction is (2R)-2,3-dihydroxy-3-methylbutanoate + NADP(+) = (2S)-2-acetolactate + NADPH + H(+). It carries out the reaction (2R,3R)-2,3-dihydroxy-3-methylpentanoate + NADP(+) = (S)-2-ethyl-2-hydroxy-3-oxobutanoate + NADPH + H(+). It participates in amino-acid biosynthesis; L-isoleucine biosynthesis; L-isoleucine from 2-oxobutanoate: step 2/4. Its pathway is amino-acid biosynthesis; L-valine biosynthesis; L-valine from pyruvate: step 2/4. Functionally, involved in the biosynthesis of branched-chain amino acids (BCAA). Catalyzes an alkyl-migration followed by a ketol-acid reduction of (S)-2-acetolactate (S2AL) to yield (R)-2,3-dihydroxy-isovalerate. In the isomerase reaction, S2AL is rearranged via a Mg-dependent methyl migration to produce 3-hydroxy-3-methyl-2-ketobutyrate (HMKB). In the reductase reaction, this 2-ketoacid undergoes a metal-dependent reduction by NADPH to yield (R)-2,3-dihydroxy-isovalerate. This chain is Ketol-acid reductoisomerase (NADP(+)), found in Geobacillus sp. (strain WCH70).